Reading from the N-terminus, the 346-residue chain is Biotin synthase (346 aa).

The 219-residue stretch at 38-256 (RQVQVSTLLS…IAVARIMMPT (219 aa)) folds into the Radical SAM core domain. [4Fe-4S] cluster-binding residues include Cys53, Cys57, and Cys60. Positions 97, 128, 188, and 260 each coordinate [2Fe-2S] cluster.

This sequence belongs to the radical SAM superfamily. Biotin synthase family. Homodimer. [4Fe-4S] cluster serves as cofactor. Requires [2Fe-2S] cluster as cofactor.

It carries out the reaction (4R,5S)-dethiobiotin + (sulfur carrier)-SH + 2 reduced [2Fe-2S]-[ferredoxin] + 2 S-adenosyl-L-methionine = (sulfur carrier)-H + biotin + 2 5'-deoxyadenosine + 2 L-methionine + 2 oxidized [2Fe-2S]-[ferredoxin]. Its pathway is cofactor biosynthesis; biotin biosynthesis; biotin from 7,8-diaminononanoate: step 2/2. Its function is as follows. Catalyzes the conversion of dethiobiotin (DTB) to biotin by the insertion of a sulfur atom into dethiobiotin via a radical-based mechanism. The polypeptide is Biotin synthase (Escherichia coli O6:K15:H31 (strain 536 / UPEC)).